A 106-amino-acid polypeptide reads, in one-letter code: Ig kappa chain C region, B allele (106 aa).

Residues 5 to 102 (PTVSIFPPST…SSSPVVKSFN (98 aa)) enclose the Ig-like domain. Cysteines 26 and 86 form a disulfide.

The protein is Ig kappa chain C region, B allele of Rattus norvegicus (Rat).